The following is a 197-amino-acid chain: Pyridoxal 5'-phosphate synthase subunit PdxT (197 aa).

53-55 (GES) is an L-glutamine binding site. The Nucleophile role is filled by Cys-85. L-glutamine contacts are provided by residues Arg-114 and 142–143 (IR). Residues His-179 and Glu-181 each act as charge relay system in the active site.

This sequence belongs to the glutaminase PdxT/SNO family. In the presence of PdxS, forms a dodecamer of heterodimers. Only shows activity in the heterodimer.

The catalysed reaction is aldehydo-D-ribose 5-phosphate + D-glyceraldehyde 3-phosphate + L-glutamine = pyridoxal 5'-phosphate + L-glutamate + phosphate + 3 H2O + H(+). The enzyme catalyses L-glutamine + H2O = L-glutamate + NH4(+). It functions in the pathway cofactor biosynthesis; pyridoxal 5'-phosphate biosynthesis. In terms of biological role, catalyzes the hydrolysis of glutamine to glutamate and ammonia as part of the biosynthesis of pyridoxal 5'-phosphate. The resulting ammonia molecule is channeled to the active site of PdxS. The sequence is that of Pyridoxal 5'-phosphate synthase subunit PdxT from Thermococcus kodakarensis (strain ATCC BAA-918 / JCM 12380 / KOD1) (Pyrococcus kodakaraensis (strain KOD1)).